Here is a 704-residue protein sequence, read N- to C-terminus: Ribosomal RNA large subunit methyltransferase K/L (704 aa).

The THUMP domain occupies 43–154 (TMYQSLLWSR…KEKASLSLDL (112 aa)).

This sequence belongs to the methyltransferase superfamily. RlmKL family.

Its subcellular location is the cytoplasm. It carries out the reaction guanosine(2445) in 23S rRNA + S-adenosyl-L-methionine = N(2)-methylguanosine(2445) in 23S rRNA + S-adenosyl-L-homocysteine + H(+). The enzyme catalyses guanosine(2069) in 23S rRNA + S-adenosyl-L-methionine = N(2)-methylguanosine(2069) in 23S rRNA + S-adenosyl-L-homocysteine + H(+). Functionally, specifically methylates the guanine in position 2445 (m2G2445) and the guanine in position 2069 (m7G2069) of 23S rRNA. This Proteus mirabilis (strain HI4320) protein is Ribosomal RNA large subunit methyltransferase K/L.